Here is a 138-residue protein sequence, read N- to C-terminus: MLQPSRRKFRKEQKGRNTGVATRGANVSFGEFGLKATERGRLTARQIEAARRAISRHIKRGGRIFIRIFPDKPISQKPAEVRMGNGKGNPEYYVAEIQPGKVLYELNGVPEDLAREAFTLAAAKLPLRTTFVTRMFGT.

Basic residues predominate over residues 1–13 (MLQPSRRKFRKEQ). The segment at 1-20 (MLQPSRRKFRKEQKGRNTGV) is disordered.

This sequence belongs to the universal ribosomal protein uL16 family. In terms of assembly, part of the 50S ribosomal subunit.

In terms of biological role, binds 23S rRNA and is also seen to make contacts with the A and possibly P site tRNAs. This is Large ribosomal subunit protein uL16 from Leptothrix cholodnii (strain ATCC 51168 / LMG 8142 / SP-6) (Leptothrix discophora (strain SP-6)).